We begin with the raw amino-acid sequence, 539 residues long: CTP synthase (539 aa).

Residues 1-268 (MSFKSIFLTG…SDFLLNKLGF (268 aa)) are amidoligase domain. Serine 14 contributes to the CTP binding site. Serine 14 contributes to the UTP binding site. 15 to 20 (SLGKGL) contacts ATP. Residue tyrosine 55 coordinates L-glutamine. An ATP-binding site is contributed by aspartate 72. Residues aspartate 72 and glutamate 142 each contribute to the Mg(2+) site. Residues 149 to 151 (DIE), 188 to 193 (KTKPTQ), and lysine 224 contribute to the CTP site. UTP-binding positions include 188 to 193 (KTKPTQ) and lysine 224. The 239-residue stretch at 294–532 (RIGLVGKYLE…IRAAKAYSLE (239 aa)) folds into the Glutamine amidotransferase type-1 domain. L-glutamine is bound at residue glycine 353. Catalysis depends on cysteine 380, which acts as the Nucleophile; for glutamine hydrolysis. L-glutamine is bound by residues 381 to 384 (LGMQ), glutamate 404, and arginine 460. Residues histidine 505 and glutamate 507 contribute to the active site.

The protein belongs to the CTP synthase family. As to quaternary structure, homotetramer.

The catalysed reaction is UTP + L-glutamine + ATP + H2O = CTP + L-glutamate + ADP + phosphate + 2 H(+). It carries out the reaction L-glutamine + H2O = L-glutamate + NH4(+). The enzyme catalyses UTP + NH4(+) + ATP = CTP + ADP + phosphate + 2 H(+). It participates in pyrimidine metabolism; CTP biosynthesis via de novo pathway; CTP from UDP: step 2/2. With respect to regulation, allosterically activated by GTP, when glutamine is the substrate; GTP has no effect on the reaction when ammonia is the substrate. The allosteric effector GTP functions by stabilizing the protein conformation that binds the tetrahedral intermediate(s) formed during glutamine hydrolysis. Inhibited by the product CTP, via allosteric rather than competitive inhibition. Its function is as follows. Catalyzes the ATP-dependent amination of UTP to CTP with either L-glutamine or ammonia as the source of nitrogen. Regulates intracellular CTP levels through interactions with the four ribonucleotide triphosphates. This Chlamydia trachomatis serovar L2 (strain ATCC VR-902B / DSM 19102 / 434/Bu) protein is CTP synthase.